The following is an 81-amino-acid chain: RNA-binding protein KhpA (81 aa).

The region spanning lysine 34–aspartate 81 is the KH domain.

The protein belongs to the KhpA RNA-binding protein family. Forms a complex with KhpB.

It is found in the cytoplasm. A probable RNA chaperone. Forms a complex with KhpB which binds to cellular RNA and controls its expression. Plays a role in peptidoglycan (PG) homeostasis and cell length regulation. The sequence is that of RNA-binding protein KhpA from Bacillus subtilis (strain 168).